A 284-amino-acid polypeptide reads, in one-letter code: 8-methylmenaquinol:fumarate reductase membrane anchor subunit (284 aa).

In terms of assembly, the MFR complex is composed of three subunits: a flavoprotein (SdhA), an iron-sulfur protein (SdhB), and one hydrophobic anchor protein (SdhE).

It is found in the periplasm. The protein localises to the cell membrane. The enzyme catalyses 8-methylmenaquinone-6 + succinate = 8-methylmenaquinol-6 + fumarate. In terms of biological role, membrane anchor subunit of 8-methylmenaquinol:fumarate reductase (MFR), that catalyzes the reduction of fumarate using 8-methylmenaquinol-6 as electron donor. The complex shows no succinate oxidation activity. Is involved in anaerobic metabolism. SdhE likely contains the quinol/quinone binding site. The protein is 8-methylmenaquinol:fumarate reductase membrane anchor subunit of Wolinella succinogenes (strain ATCC 29543 / DSM 1740 / CCUG 13145 / JCM 31913 / LMG 7466 / NCTC 11488 / FDC 602W) (Vibrio succinogenes).